Here is a 374-residue protein sequence, read N- to C-terminus: Pectate lyase 2 (374 aa).

The N-terminal stretch at 1–22 (MKYLLPTAATGLLLLAAQPAVA) is a signal peptide. The cysteines at positions 93 and 176 are disulfide-linked. Ca(2+)-binding residues include D150, D152, E187, and D191. R239 is an active-site residue. Cysteines 350 and 373 form a disulfide.

It belongs to the polysaccharide lyase 1 family. PLADES subfamily. It depends on Ca(2+) as a cofactor.

The protein resides in the secreted. It catalyses the reaction Eliminative cleavage of (1-&gt;4)-alpha-D-galacturonan to give oligosaccharides with 4-deoxy-alpha-D-galact-4-enuronosyl groups at their non-reducing ends.. Its pathway is glycan metabolism; pectin degradation; 2-dehydro-3-deoxy-D-gluconate from pectin: step 2/5. In terms of biological role, involved in maceration and soft-rotting of plant tissue. In Pectobacterium atrosepticum (strain SCRI 1043 / ATCC BAA-672) (Erwinia carotovora subsp. atroseptica), this protein is Pectate lyase 2 (pel2).